The following is a 154-amino-acid chain: Large ribosomal subunit protein uL13 (154 aa).

It belongs to the universal ribosomal protein uL13 family. As to quaternary structure, part of the 50S ribosomal subunit.

Its function is as follows. This protein is one of the early assembly proteins of the 50S ribosomal subunit, although it is not seen to bind rRNA by itself. It is important during the early stages of 50S assembly. This Brucella abortus (strain S19) protein is Large ribosomal subunit protein uL13.